Reading from the N-terminus, the 87-residue chain is Small ribosomal subunit protein uS17 (87 aa).

Belongs to the universal ribosomal protein uS17 family. In terms of assembly, part of the 30S ribosomal subunit.

One of the primary rRNA binding proteins, it binds specifically to the 5'-end of 16S ribosomal RNA. The protein is Small ribosomal subunit protein uS17 of Bacillus pumilus (strain SAFR-032).